We begin with the raw amino-acid sequence, 393 residues long: NAD(P)H-quinone oxidoreductase subunit H, chloroplastic (393 aa).

Belongs to the complex I 49 kDa subunit family. In terms of assembly, NDH is composed of at least 16 different subunits, 5 of which are encoded in the nucleus.

The protein localises to the plastid. The protein resides in the chloroplast thylakoid membrane. It carries out the reaction a plastoquinone + NADH + (n+1) H(+)(in) = a plastoquinol + NAD(+) + n H(+)(out). The catalysed reaction is a plastoquinone + NADPH + (n+1) H(+)(in) = a plastoquinol + NADP(+) + n H(+)(out). In terms of biological role, NDH shuttles electrons from NAD(P)H:plastoquinone, via FMN and iron-sulfur (Fe-S) centers, to quinones in the photosynthetic chain and possibly in a chloroplast respiratory chain. The immediate electron acceptor for the enzyme in this species is believed to be plastoquinone. Couples the redox reaction to proton translocation, and thus conserves the redox energy in a proton gradient. This Ranunculus macranthus (Large buttercup) protein is NAD(P)H-quinone oxidoreductase subunit H, chloroplastic.